The primary structure comprises 423 residues: D-threonate kinase (423 aa).

Residues aspartate 9, arginine 51, and 81 to 84 (KIDS) contribute to the substrate site. ATP-binding positions include serine 245, 355–358 (GGDI), and glycine 401.

This sequence belongs to the four-carbon acid sugar kinase family.

It carries out the reaction D-threonate + ATP = 4-O-phospho-D-threonate + ADP + H(+). Catalyzes the ATP-dependent phosphorylation of D-threonate to D-threonate 4-phosphate. Can also phosphorylate 4-hydroxy-L-threonine, with lower efficiency. This side reaction may serve to deal with the toxicity of 4-hydroxy-L-threonine by converting it into 4-hydroxy-L-threonine 4-phosphate, a useful product that can be used by PdxA2. In Salmonella typhimurium (strain LT2 / SGSC1412 / ATCC 700720), this protein is D-threonate kinase.